A 49-amino-acid chain; its full sequence is U-theraphotoxin-Lk2a (49 aa).

Intrachain disulfides connect C4-C17, C8-C41, C22-C24, and C35-C46.

Belongs to the neurotoxin 12 (Hwtx-2) family. 04 (lasiotoxin) subfamily. In terms of tissue distribution, expressed by the venom gland.

Its subcellular location is the secreted. Its function is as follows. Toxin that causes irreversible contractile paralysis into adult Aedes aegypti resulting in 100% mortality after 24 hours. This chain is U-theraphotoxin-Lk2a, found in Lasiodora klugi (Bahia scarlet tarantula).